The chain runs to 688 residues: SRSF protein kinase 2 (688 aa).

The segment at 1 to 65 (MSVNSEKSSS…EQEDPADYCK (65 aa)) is disordered. Residues 22–43 (LVPPPPPPPPPPPPPLPDPTPP) are compositionally biased toward pro residues. Acidic residues predominate over residues 44 to 61 (EPEEEILGSDDEEQEDPA). The residue at position 52 (Ser-52) is a Phosphoserine. Positions 81-684 (YHVIRKLGWG…ASAGECLRHP (604 aa)) constitute a Protein kinase domain. ATP-binding positions include 87 to 95 (LGWGHFSTV) and Lys-110. The Proton acceptor role is filled by Asp-214. 3 disordered regions span residues 239 to 277 (WQKA…KKQK), 329 to 444 (GLEE…GRHK), and 469 to 501 (SVLS…TGDL). A compositionally biased stretch (basic residues) spans 265 to 277 (SKNKKKKLKKKQK). Ser-380 carries the post-translational modification Phosphoserine. Positions 397-421 (QLDDEDDDEEDCPNPEEYNLDEPNA) are enriched in acidic residues. Over residues 423–433 (SDYTYSSSYEQ) the composition is skewed to polar residues. Ser-475 is modified (phosphoserine). Thr-478 is subject to Phosphothreonine. Phosphoserine is present on residues Ser-484, Ser-486, and Ser-490. Thr-492 carries the post-translational modification Phosphothreonine; by PKB/AKT1. Phosphoserine occurs at positions 494 and 497. At Ser-588 the chain carries Phosphoserine; by CK2.

This sequence belongs to the protein kinase superfamily. CMGC Ser/Thr protein kinase family. As to quaternary structure, associates with U4/U6-U5 tri-small nuclear ribonucleoproteins (U4/U6-U5 tri-snRNPs). Interacts with PKB/AKT1 in a phosphorylation-dependent manner. The phosphorylated form (by PKB/AKT1) interacts with YWHAB and YWHAE. Interaction with YWHAB suppresses its cleavage by caspases and inhibits the release of its N-terminal pro-apoptotic fragment. Interacts with SFN. Interacts with ACIN1. Interacts with POLR2A/RNA polymerase II; the interaction occurs during the co-transcriptional formation of inappropriate R-loops. Mg(2+) serves as cofactor. In terms of processing, phosphorylation at Thr-492 by PKB/AKT1 enhances its stimulatory activity in triggering cyclin-D1 (CCND1) expression and promoting apoptosis in neurons, which can be blocked by YWHAB. It also enhances its protein kinase activity toward ACIN1 and SRSF2, promotes its nuclear translocation and prevents its proteolytic cleavage. Post-translationally, proteolytically cleaved at Asp-139 and Asp-403 by caspase-3 during apoptotic cell death. Cleavage at Asp-139 which is the major site of cleavage, produces a small N-terminal fragment that translocates into nucleus and promotes VP16-induced apoptosis. As to expression, highly expressed in brain, moderately expressed in heart and skeletal muscle and at low levels in lung, liver, and kidney.

Its subcellular location is the cytoplasm. It localises to the nucleus. The protein resides in the nucleoplasm. The protein localises to the nucleus speckle. It is found in the chromosome. The enzyme catalyses L-seryl-[protein] + ATP = O-phospho-L-seryl-[protein] + ADP + H(+). The catalysed reaction is L-threonyl-[protein] + ATP = O-phospho-L-threonyl-[protein] + ADP + H(+). Its activity is regulated as follows. Activated by phosphorylation on Ser-52 and Ser-588. Serine/arginine-rich protein-specific kinase which specifically phosphorylates its substrates at serine residues located in regions rich in arginine/serine dipeptides, known as RS domains and is involved in the phosphorylation of SR splicing factors and the regulation of splicing. Promotes neuronal apoptosis by up-regulating cyclin-D1 (CCND1) expression. This is done by the phosphorylation of SRSF2, leading to the suppression of p53/TP53 phosphorylation thereby relieving the repressive effect of p53/TP53 on cyclin-D1 (CCND1) expression. Phosphorylates ACIN1, and redistributes it from the nuclear speckles to the nucleoplasm, resulting in cyclin A1 but not cyclin A2 up-regulation. Plays an essential role in spliceosomal B complex formation via the phosphorylation of DDX23/PRP28. Probably by phosphorylating DDX23, leads to the suppression of incorrect R-loops formed during transcription; R-loops are composed of a DNA:RNA hybrid and the associated non-template single-stranded DNA. Can mediate hepatitis B virus (HBV) core protein phosphorylation. Plays a negative role in the regulation of HBV replication through a mechanism not involving the phosphorylation of the core protein but by reducing the packaging efficiency of the pregenomic RNA (pgRNA) without affecting the formation of the viral core particles. The chain is SRSF protein kinase 2 from Homo sapiens (Human).